Consider the following 445-residue polypeptide: MKTQEIMTMLEAKHPGESEFLQAVKEVLLSVEEVYNQHPEFEKNGIIERIVEPDRVFTFRVPWVDDQGKVQVNIGYRVQFNNAIGPYKGGIRFHPSVNLSILKFLGFEQMFKNALTTLPMGGGKGGADFSPKGKSEAEIMRFCQSFMTELWRNIGPDTDIPAGDIGVGGREVGYMFGMYKKLAREHTGTLTGKGFEFGGSRLRPESTGFGAVYFVQNMCKQNGVDYKGKTLAISGFGNVAWGVAQKATELGIKVVTISGPDGYVYDPDGINTPEKFRCMLDLRDSGNDVVSDYVKRFPNAQFFPGKKPWEQKVDFAMPCATQNEMNLEDAKTLHKNGVTLVAETSNMGCTAEASEYYVANKMLFAPGKAVNAGGVSCSGLEMTQNAMHLVWTNEEVDKWLHQIMQDIHEQCVTYGKDGNYIDYVKGANIAGFMKVAKAMVAQGVC.

The active site involves Lys124.

It belongs to the Glu/Leu/Phe/Val dehydrogenases family. As to quaternary structure, homohexamer.

It is found in the cell surface. It carries out the reaction L-glutamate + NAD(+) + H2O = 2-oxoglutarate + NH4(+) + NADH + H(+). Its function is as follows. Probably involved in degradation rather than biosynthesis of glutamate. The sequence is that of NAD-specific glutamate dehydrogenase (gdh) from Porphyromonas gingivalis (strain ATCC 33277 / DSM 20709 / CIP 103683 / JCM 12257 / NCTC 11834 / 2561).